Reading from the N-terminus, the 143-residue chain is Transcriptional regulator MraZ (143 aa).

SpoVT-AbrB domains follow at residues 5 to 47 and 76 to 119; these read EYKH…SLKE and ACEC…SENN.

This sequence belongs to the MraZ family. As to quaternary structure, forms oligomers.

Its subcellular location is the cytoplasm. The protein resides in the nucleoid. This is Transcriptional regulator MraZ from Caldicellulosiruptor bescii (strain ATCC BAA-1888 / DSM 6725 / KCTC 15123 / Z-1320) (Anaerocellum thermophilum).